The chain runs to 215 residues: 7-methyl-GTP pyrophosphatase (215 aa).

Aspartate 79 functions as the Proton acceptor in the catalytic mechanism.

It belongs to the Maf family. YceF subfamily. It depends on a divalent metal cation as a cofactor.

It localises to the cytoplasm. It carries out the reaction N(7)-methyl-GTP + H2O = N(7)-methyl-GMP + diphosphate + H(+). Nucleoside triphosphate pyrophosphatase that hydrolyzes 7-methyl-GTP (m(7)GTP). May have a dual role in cell division arrest and in preventing the incorporation of modified nucleotides into cellular nucleic acids. The sequence is that of 7-methyl-GTP pyrophosphatase from Burkholderia mallei (strain ATCC 23344).